Consider the following 166-residue polypeptide: Ribosome maturation factor RimM (166 aa).

One can recognise a PRC barrel domain in the interval 94–166 (EDEFYITDLN…AILNYKRDEL (73 aa)).

This sequence belongs to the RimM family. In terms of assembly, binds ribosomal protein uS19.

The protein resides in the cytoplasm. Its function is as follows. An accessory protein needed during the final step in the assembly of 30S ribosomal subunit, possibly for assembly of the head region. Essential for efficient processing of 16S rRNA. May be needed both before and after RbfA during the maturation of 16S rRNA. It has affinity for free ribosomal 30S subunits but not for 70S ribosomes. In Rickettsia bellii (strain RML369-C), this protein is Ribosome maturation factor RimM.